Here is a 92-residue protein sequence, read N- to C-terminus: MKVVPILLFVLLAALQYRLWFGKNSIPEYVAMEKSVAEQAEQNTELLQRNNLLKADIQDLKVGLEAVEERARNELGLIKQGETFYRILPSEE.

At Met-1–Val-3 the chain is on the cytoplasmic side. A helical membrane pass occupies residues Val-4 to Phe-21. The Periplasmic portion of the chain corresponds to Gly-22–Glu-92. The stretch at Ala-31–Glu-74 forms a coiled coil.

Belongs to the FtsB family. In terms of assembly, part of a complex composed of FtsB, FtsL and FtsQ.

Its subcellular location is the cell inner membrane. Essential cell division protein. May link together the upstream cell division proteins, which are predominantly cytoplasmic, with the downstream cell division proteins, which are predominantly periplasmic. The protein is Cell division protein FtsB of Pseudoalteromonas atlantica (strain T6c / ATCC BAA-1087).